Consider the following 701-residue polypeptide: Elongation factor G (701 aa).

The tr-type G domain occupies 8–291 (SRYRNIGIVA…AVIDYLPAPI (284 aa)). Residues 17–24 (AHVDAGKT), 89–93 (DTPGH), and 143–146 (NKMD) each bind GTP.

This sequence belongs to the TRAFAC class translation factor GTPase superfamily. Classic translation factor GTPase family. EF-G/EF-2 subfamily.

It localises to the cytoplasm. Its function is as follows. Catalyzes the GTP-dependent ribosomal translocation step during translation elongation. During this step, the ribosome changes from the pre-translocational (PRE) to the post-translocational (POST) state as the newly formed A-site-bound peptidyl-tRNA and P-site-bound deacylated tRNA move to the P and E sites, respectively. Catalyzes the coordinated movement of the two tRNA molecules, the mRNA and conformational changes in the ribosome. The chain is Elongation factor G from Pseudomonas syringae pv. tomato (strain ATCC BAA-871 / DC3000).